A 182-amino-acid chain; its full sequence is NADH-quinone oxidoreductase subunit B (182 aa).

The [4Fe-4S] cluster site is built by cysteine 61, cysteine 62, cysteine 126, and cysteine 156.

It belongs to the complex I 20 kDa subunit family. NDH-1 is composed of 14 different subunits. Subunits NuoB, C, D, E, F, and G constitute the peripheral sector of the complex. [4Fe-4S] cluster is required as a cofactor.

It localises to the cell inner membrane. It catalyses the reaction a quinone + NADH + 5 H(+)(in) = a quinol + NAD(+) + 4 H(+)(out). Its function is as follows. NDH-1 shuttles electrons from NADH, via FMN and iron-sulfur (Fe-S) centers, to quinones in the respiratory chain. The immediate electron acceptor for the enzyme in this species is believed to be ubiquinone. Couples the redox reaction to proton translocation (for every two electrons transferred, four hydrogen ions are translocated across the cytoplasmic membrane), and thus conserves the redox energy in a proton gradient. This Xanthomonas oryzae pv. oryzae (strain PXO99A) protein is NADH-quinone oxidoreductase subunit B.